The primary structure comprises 190 residues: Crossover junction endodeoxyribonuclease RuvC (190 aa).

Catalysis depends on residues Asp-8, Glu-67, and Asp-139. 3 residues coordinate Mg(2+): Asp-8, Glu-67, and Asp-139.

Belongs to the RuvC family. In terms of assembly, homodimer which binds Holliday junction (HJ) DNA. The HJ becomes 2-fold symmetrical on binding to RuvC with unstacked arms; it has a different conformation from HJ DNA in complex with RuvA. In the full resolvosome a probable DNA-RuvA(4)-RuvB(12)-RuvC(2) complex forms which resolves the HJ. Requires Mg(2+) as cofactor.

It localises to the cytoplasm. The catalysed reaction is Endonucleolytic cleavage at a junction such as a reciprocal single-stranded crossover between two homologous DNA duplexes (Holliday junction).. Its function is as follows. The RuvA-RuvB-RuvC complex processes Holliday junction (HJ) DNA during genetic recombination and DNA repair. Endonuclease that resolves HJ intermediates. Cleaves cruciform DNA by making single-stranded nicks across the HJ at symmetrical positions within the homologous arms, yielding a 5'-phosphate and a 3'-hydroxyl group; requires a central core of homology in the junction. The consensus cleavage sequence is 5'-(A/T)TT(C/G)-3'. Cleavage occurs on the 3'-side of the TT dinucleotide at the point of strand exchange. HJ branch migration catalyzed by RuvA-RuvB allows RuvC to scan DNA until it finds its consensus sequence, where it cleaves and resolves the cruciform DNA. In Haemophilus influenzae (strain PittGG), this protein is Crossover junction endodeoxyribonuclease RuvC.